Here is a 1030-residue protein sequence, read N- to C-terminus: E3 ubiquitin-protein ligase mib1 (1030 aa).

Residues 6–74 (NNRVMMEGVG…AYDVRILDSA (69 aa)) enclose the MIB/HERC2 1 domain. Residues 80 to 132 (HDGTMCDTCRQQPIIGIRWKCAECTNYDLCTTCYHGDKHHLRHRFYRITTPGS) form a ZZ-type zinc finger. Zn(2+) is bound by residues Cys85, Cys88, Cys100, Cys103, Cys109, Cys112, His118, and His122. The 79-residue stretch at 143-221 (SKKITARGIF…MSDLKCVQDA (79 aa)) folds into the MIB/HERC2 2 domain. 9 ANK repeats span residues 430-460 (DINE…DVNG), 463-492 (AGHT…DLEA), 496-525 (DGDR…DLNA), 529-558 (RRQT…HPSL), 562-591 (EGDT…DVTI), 595-627 (NGFN…IVDE), 631-661 (DGYT…NLDV), 665-694 (NQQT…KLDV), and 698-727 (DGDT…VSKV). RING-type zinc fingers lie at residues 817-852 (CMVC…LICK) and 864-899 (CVVC…VQCR). Residues 957 to 986 (ALQRDKDNTNVNADVQKLQQQLQDIKEQTM) are a coiled coil. Residues 987–1020 (CPVCLDRLKNMIFMCGHGTCQLCGDRMSECPICR) form an RING-type 3 zinc finger.

In terms of assembly, interacts with deltaA (dla) and deltaD (dld).

The protein resides in the cytoplasm. It localises to the cytoskeleton. Its subcellular location is the microtubule organizing center. The protein localises to the centrosome. It is found in the centriolar satellite. The protein resides in the cell membrane. It catalyses the reaction S-ubiquitinyl-[E2 ubiquitin-conjugating enzyme]-L-cysteine + [acceptor protein]-L-lysine = [E2 ubiquitin-conjugating enzyme]-L-cysteine + N(6)-ubiquitinyl-[acceptor protein]-L-lysine.. Its pathway is protein modification; protein ubiquitination. Functionally, E3 ubiquitin-protein ligase that mediates ubiquitination of Delta receptors, which act as ligands of Notch proteins. Positively regulates the Delta-mediated Notch signaling by ubiquitinating the intracellular domain of Delta, leading to endocytosis of Delta receptors. It thereby participates in many processes regulated by the Notch signaling pathway, such as midline cell fate specification prior to germ layer formation, patterning of sensory cell differentiation in the ear, neurogenesis of the hindbrain and commitment to a secretory fate in the intestine. Essential for early embryonic development. This is E3 ubiquitin-protein ligase mib1 (mib1) from Danio rerio (Zebrafish).